Reading from the N-terminus, the 466-residue chain is Adenosylhomocysteinase (466 aa).

Substrate is bound by residues Thr-57, Asp-132, and Glu-192. 193–195 (TTT) lines the NAD(+) pocket. 2 residues coordinate substrate: Lys-222 and Asp-226. NAD(+) is bound by residues Asn-227, 256–261 (GYGDVG), Glu-279, Asn-314, 335–337 (IGH), and Asn-380.

Belongs to the adenosylhomocysteinase family. NAD(+) is required as a cofactor.

The protein localises to the cytoplasm. It catalyses the reaction S-adenosyl-L-homocysteine + H2O = L-homocysteine + adenosine. It participates in amino-acid biosynthesis; L-homocysteine biosynthesis; L-homocysteine from S-adenosyl-L-homocysteine: step 1/1. Its function is as follows. May play a key role in the regulation of the intracellular concentration of adenosylhomocysteine. This is Adenosylhomocysteinase from Sinorhizobium medicae (strain WSM419) (Ensifer medicae).